Consider the following 635-residue polypeptide: MNNQGRSILTWAALFVFVILLFNVFQSDGLLGGRNNITFSDFLTRVDEKTVNSVKIQGRVIEGTSNDGSTFNTYAPDYPDLVNRLTSNDVNIEVVPLETRMNTFLGFLISWFPMLLLIGVWVFFMRQMHGGGKAMGFGKSKARLLSDKGPKITFKDVAGIDEAKEELTEIVDFLRDPSKFQKLGGKIPKGCLLIGPPGTGKTLLAKAIAGEANVPFFSISGSDFVEMFVGVGASRVRDMFEQGKRNAPCIIFIDEIDAVGRHRGIGMGGGNDEREQTLNQMLVEMDGFEANEGVVIIAATNRPDVLDRALLRPGRFDRQIAVANPDINGREQILKVHLKKIKYNSTVLARIIARGTPGFSGAELANLVNEAALIAARLGKKEVDMHDMEEAKDKVLMGVARRSIAMSEKEKRLTAYHEGGHALVGLYCPAASPLHKATIIPRGNALGMVQRLPETDEYSQNREQMESSIAVYMAGRVAEEIIFGRNKVTSGASSDIKGATNIARAMVTKAGLSDLIGPIFHGSSSDDMYGRQPSNETSEATAELIDAEVKKIITQGYEFAKDILTKHIDQLHTLANALIEYETLSGQQIKNLLSGRALDSEEENKFPFNDSPTIKIDKEKSPEKAKKAKKESTNI.

Over 1–6 the chain is Cytoplasmic; the sequence is MNNQGR. The chain crosses the membrane as a helical span at residues 7 to 27; it reads SILTWAALFVFVILLFNVFQS. Residues 28-103 are Periplasmic-facing; that stretch reads DGLLGGRNNI…VVPLETRMNT (76 aa). Residues 104 to 124 form a helical membrane-spanning segment; it reads FLGFLISWFPMLLLIGVWVFF. The Cytoplasmic portion of the chain corresponds to 125–635; the sequence is MRQMHGGGKA…KKAKKESTNI (511 aa). An ATP-binding site is contributed by 195–202; sequence GPPGTGKT. Zn(2+) is bound at residue histidine 417. Glutamate 418 is a catalytic residue. Histidine 421 and aspartate 495 together coordinate Zn(2+). The interval 600–635 is disordered; sequence SEEENKFPFNDSPTIKIDKEKSPEKAKKAKKESTNI. Residues 615–635 show a composition bias toward basic and acidic residues; the sequence is KIDKEKSPEKAKKAKKESTNI.

This sequence in the central section; belongs to the AAA ATPase family. In the C-terminal section; belongs to the peptidase M41 family. Homohexamer. Zn(2+) serves as cofactor.

Its subcellular location is the cell inner membrane. Functionally, acts as a processive, ATP-dependent zinc metallopeptidase for both cytoplasmic and membrane proteins. Plays a role in the quality control of integral membrane proteins. This chain is ATP-dependent zinc metalloprotease FtsH, found in Rickettsia felis (strain ATCC VR-1525 / URRWXCal2) (Rickettsia azadi).